Consider the following 567-residue polypeptide: Formate--tetrahydrofolate ligase (567 aa).

68–75 (TPLGEGKT) lines the ATP pocket.

The protein belongs to the formate--tetrahydrofolate ligase family.

The enzyme catalyses (6S)-5,6,7,8-tetrahydrofolate + formate + ATP = (6R)-10-formyltetrahydrofolate + ADP + phosphate. The protein operates within one-carbon metabolism; tetrahydrofolate interconversion. The sequence is that of Formate--tetrahydrofolate ligase from Desulforamulus reducens (strain ATCC BAA-1160 / DSM 100696 / MI-1) (Desulfotomaculum reducens).